Consider the following 242-residue polypeptide: MNRCWALFLSLCCYLRLVSAEGDPIPEELYEMLSDHSIRSFDDLQRLLHGASVDEDGAELDLNLTRSHSGDELESLSRGRRSLGSPTVAEPAMIAECKTRTEVFEISRRLIDRTNANFLVWPPCVEVQRCSGCCNNRNVQCRPTQVQLRPVQVRKIEIVRKKPTFKKATVTLEDHLACKCETVVAARPVTRTPGSSQDLRAAKTPQTRVTIRTVRVRRPPKGKHRKFKHTHDKKALKETLGA.

Positions 1–20 (MNRCWALFLSLCCYLRLVSA) are cleaved as a signal peptide. The propeptide at 21–81 (EGDPIPEELY…ELESLSRGRR (61 aa)) is removed in mature form. Asparagine 63 is a glycosylation site (N-linked (GlcNAc...) asparagine). Intrachain disulfides connect cysteine 97–cysteine 141, cysteine 130–cysteine 178, and cysteine 134–cysteine 180. A compositionally biased stretch (basic residues) spans 219–232 (PPKGKHRKFKHTHD). The tract at residues 219–242 (PPKGKHRKFKHTHDKKALKETLGA) is disordered. The span at 233–242 (KKALKETLGA) shows a compositional bias: basic and acidic residues.

The protein belongs to the PDGF/VEGF growth factor family. Antiparallel homodimer; disulfide-linked. Antiparallel heterodimer with PDGFA; disulfide-linked. The PDGFB homodimer interacts with PDGFRA and PDGFRB homodimers, and with heterodimers formed by PDGFRA and PDGFRB. The heterodimer composed of PDGFA and PDGFB interacts with PDGFRB homodimers, and with heterodimers formed by PDGFRA and PDGFRB. Interacts with XLKD1. Interacts with LRP1. Interacts with SORL1 (via the N-terminal ectodomain). Interacts with CD82; this interaction inhibits PDGFB-mediated signaling pathway.

It localises to the secreted. Growth factor that plays an essential role in the regulation of embryonic development, cell proliferation, cell migration, survival and chemotaxis. Potent mitogen for cells of mesenchymal origin. Required for normal proliferation and recruitment of pericytes and vascular smooth muscle cells in the central nervous system, skin, lung, heart and placenta. Required for normal blood vessel development, and for normal development of kidney glomeruli. Plays an important role in wound healing. Signaling is modulated by the formation of heterodimers with PDGFA. This Canis lupus familiaris (Dog) protein is Platelet-derived growth factor subunit B (PDGFB).